A 512-amino-acid polypeptide reads, in one-letter code: 2-isopropylmalate synthase (512 aa).

A Pyruvate carboxyltransferase domain is found at 5 to 268 (LIIFDTTLRD…DLNIDTTHIV (264 aa)). Mn(2+) contacts are provided by Asp-14, His-202, His-204, and Asn-239. The tract at residues 394 to 512 (AFVSLSQHSE…SQAEKVAAQG (119 aa)) is regulatory domain.

It belongs to the alpha-IPM synthase/homocitrate synthase family. LeuA type 1 subfamily. Homodimer. The cofactor is Mn(2+).

It localises to the cytoplasm. The enzyme catalyses 3-methyl-2-oxobutanoate + acetyl-CoA + H2O = (2S)-2-isopropylmalate + CoA + H(+). Its pathway is amino-acid biosynthesis; L-leucine biosynthesis; L-leucine from 3-methyl-2-oxobutanoate: step 1/4. In terms of biological role, catalyzes the condensation of the acetyl group of acetyl-CoA with 3-methyl-2-oxobutanoate (2-ketoisovalerate) to form 3-carboxy-3-hydroxy-4-methylpentanoate (2-isopropylmalate). This chain is 2-isopropylmalate synthase, found in Variovorax paradoxus (strain S110).